Consider the following 927-residue polypeptide: Protein unc-45 homolog B (927 aa).

TPR repeat units follow at residues 4–37, 41–74, and 76–108; these read PVQL…ITDK, AVLY…DASD, and KALF…EPKN. 3 ARM repeats span residues 167–206, 209–248, and 746–785; these read DAGA…GMCT, RARA…NIVD, and DKLR…NLAV.

It localises to the cytoplasm. The protein resides in the myofibril. Its subcellular location is the sarcomere. It is found in the z line. The protein localises to the a band. It localises to the perinuclear region. The protein resides in the cytosol. In terms of biological role, acts as a co-chaperone for HSP90 and is required for proper folding of the myosin motor domain. Plays a role in sarcomere formation during muscle cell assembly. Is necessary for normal early lens development. This is Protein unc-45 homolog B from Xenopus laevis (African clawed frog).